A 124-amino-acid polypeptide reads, in one-letter code: Fluoride-specific ion channel FluC (124 aa).

Transmembrane regions (helical) follow at residues 1–21, 36–56, 66–86, and 94–114; these read MAYLLVFVGGGLGAMFRHFIN, TFFINVTGSIVMGLIAGYLAF, LFLMTGILGGYTTFSAFSLDA, and AVGLAVVYVLGSVVLAIAGLF. Residues Gly-74 and Thr-77 each contribute to the Na(+) site.

This sequence belongs to the fluoride channel Fluc/FEX (TC 1.A.43) family.

It localises to the cell inner membrane. It carries out the reaction fluoride(in) = fluoride(out). Its activity is regulated as follows. Na(+) is not transported, but it plays an essential structural role and its presence is essential for fluoride channel function. Functionally, fluoride-specific ion channel. Important for reducing fluoride concentration in the cell, thus reducing its toxicity. This Rhodopseudomonas palustris (strain ATCC BAA-98 / CGA009) protein is Fluoride-specific ion channel FluC.